A 589-amino-acid polypeptide reads, in one-letter code: Chromodomain Y-like protein (589 aa).

Residues 1-10 (MGLGSSQPST) show a composition bias toward polar residues. A disordered region spans residues 1-57 (MGLGSSQPSTKEAEPCTLQEKEEHPVDDTRQQNNAVPATVSDPDQVSPAVQDAETQV). Residues 11 to 30 (KEAEPCTLQEKEEHPVDDTR) show a composition bias toward basic and acidic residues. One can recognise a Chromo domain in the interval 55–115 (TQVESIVDKR…RHNERQKEGT (61 aa)). The interaction with EZH2 stretch occupies residues 55–300 (TQVESIVDKR…TIQTSVTGVT (246 aa)). Ser82 is modified (phosphoserine). Residues 110-155 (RQKEGTLARANRASPSNARKQISRSTHSALSKTNPKALVVGKDHES) are disordered. Residues 117-128 (ARANRASPSNAR) are compositionally biased toward low complexity. N6,N6,N6-trimethyllysine; by EHMT2; alternate is present on Lys129. At Lys129 the chain carries N6,N6-dimethyllysine; by EHMT2; alternate. Lys129 is subject to N6-methyllysine; by EHMT2; alternate. Polar residues predominate over residues 132–143 (SRSTHSALSKTN). Phosphoserine is present on residues Ser164, Ser195, and Ser210. The segment at 202-224 (SIDGFHGESPEKLDQGAEDTVTP) is disordered. Residues 206–216 (FHGESPEKLDQ) are compositionally biased toward basic and acidic residues. Residues 353-585 (SENNSLNPEV…DSMLKYLQRK (233 aa)) are acetyl-CoA-binding domain.

As to quaternary structure, forms multimers and multimerization is required for stable binding to chromatin. Interacts with HDAC1 and HDAC2 via its C-terminal acetyl-CoA-binding domain. Interacts with EZH2, EED, SUZ12, REST, EHMT1 and EHMT2. Part of a complex containing at least CDYL, REST, WIZ, SETB1, EHMT1 and EHMT2. Part of a complex containing at least CDYL, MIER1, MIER2, HDAC1 and HDAC2. Interacts with CHAF1A and CHAF1B; bridging the CAF-1 complex to the MCM2-7 (MCM) complex. Interacts with MCM3 and MCM5; bridging the CAF-1 complex to the MCM2-7 (MCM) complex. Recruited to Xist RNA-coated X chromosome. Interacts with EHMT2 and PRDM9; interaction only takes place when PRDM9 is bound to hotspot DNA. Expressed in the brain, with expression in the hippocampal dentate gyrus, CA1, striatum and cortex (at protein level). Expressed in the prelimbic cortex.

Its subcellular location is the nucleus. The protein localises to the chromosome. The enzyme catalyses 3-hydroxybutanoyl-CoA = (2E)-butenoyl-CoA + H2O. Functionally, chromatin reader protein that recognizes and binds histone H3 trimethylated at 'Lys-9', dimethylated at 'Lys-27' and trimethylated at 'Lys-27' (H3K9me3, H3K27me2 and H3K27me3, respectively). Part of multimeric repressive chromatin complexes, where it is required for transmission and restoration of repressive histone marks, thereby preserving the epigenetic landscape. Required for chromatin targeting and maximal enzymatic activity of Polycomb repressive complex 2 (PRC2); acts as a positive regulator of PRC2 activity by bridging the pre-existing histone H3K27me3 and newly recruited PRC2 on neighboring nucleosomes. Acts as a corepressor for REST by facilitating histone-lysine N-methyltransferase EHMT2 recruitment and H3K9 dimethylation at REST target genes for repression. Involved in X chromosome inactivation in females: recruited to Xist RNA-coated X chromosome and facilitates propagation of H3K9me2 by anchoring EHMT2. Promotes EZH2 accumulation and H3K27me3 methylation at DNA double strand breaks (DSBs), thereby facilitating transcriptional repression at sites of DNA damage and homology-directed repair of DSBs. Required for neuronal migration during brain development by repressing expression of RHOA. By repressing the expression of SCN8A, contributes to the inhibition of intrinsic neuronal excitability and epileptogenesis. In addition to acting as a chromatin reader, acts as a hydro-lyase. Shows crotonyl-coA hydratase activity by mediating the conversion of crotonyl-CoA ((2E)-butenoyl-CoA) to beta-hydroxybutyryl-CoA (3-hydroxybutanoyl-CoA), thereby acting as a negative regulator of histone crotonylation. Histone crotonylation is required during spermatogenesis; down-regulation of histone crotonylation by CDYL regulates the reactivation of sex chromosome-linked genes in round spermatids and histone replacement in elongating spermatids. By regulating histone crotonylation and trimethylation of H3K27, may be involved in stress-induced depression-like behaviors, possibly by regulating VGF expression. Displays acetyltransferase activity toward tubulin in vitro; such activity is however unsure in vivo and additional evidences would be required to confirm this result. Its function is as follows. Not able to recognize and bind histone H3K9me3, histone H3K27me2 and histone H3K27me3, due to the presence of a N-terminal extension that inactivates the chromo domain. The protein is Chromodomain Y-like protein of Rattus norvegicus (Rat).